Reading from the N-terminus, the 160-residue chain is MMPAKLQLDVLRTLQSSARHGTQTLKNSNFLERFHKDRIVFCLPFFPALFFVPVQKVLQHLCLRFTQVAPYFIIQLFDLPSRHAENLAPLLASCRIQYTNCFSSSSNGQVPSIISLYLRVDLSPFYAKIFQISYRVPMIWLDVFQVFFVFLIISQHSLHS.

2 consecutive transmembrane segments (helical) span residues 39 to 59 and 136 to 156; these read IVFC…KVLQ and VPMI…ISQH.

The protein belongs to the UPF0479 family.

It is found in the membrane. The polypeptide is Putative UPF0479 protein YBL113W-A (Saccharomyces cerevisiae (strain ATCC 204508 / S288c) (Baker's yeast)).